Reading from the N-terminus, the 430-residue chain is Adenylosuccinate synthetase (430 aa).

Residues 12-18 (GDEGKGK) and 40-42 (GHT) each bind GTP. Asp13 serves as the catalytic Proton acceptor. Positions 13 and 40 each coordinate Mg(2+). IMP is bound by residues 13–16 (DEGK), 38–41 (NAGH), Thr129, Arg143, Gln224, Thr239, and Arg303. His41 serves as the catalytic Proton donor. 299-305 (TVSNRER) is a binding site for substrate. GTP contacts are provided by residues Arg305, 331-333 (KLD), and 413-415 (STG).

The protein belongs to the adenylosuccinate synthetase family. As to quaternary structure, homodimer. Mg(2+) is required as a cofactor.

It localises to the cytoplasm. The enzyme catalyses IMP + L-aspartate + GTP = N(6)-(1,2-dicarboxyethyl)-AMP + GDP + phosphate + 2 H(+). The protein operates within purine metabolism; AMP biosynthesis via de novo pathway; AMP from IMP: step 1/2. Functionally, plays an important role in the de novo pathway of purine nucleotide biosynthesis. Catalyzes the first committed step in the biosynthesis of AMP from IMP. This Ehrlichia ruminantium (strain Gardel) protein is Adenylosuccinate synthetase.